Reading from the N-terminus, the 486-residue chain is Glutamate--tRNA ligase (486 aa).

The 'HIGH' region motif lies at 11-21; sequence PSPTGLLHIGN. The 'KMSKS' region motif lies at 255 to 259; that stretch reads KLSKR. Lys-258 lines the ATP pocket.

Belongs to the class-I aminoacyl-tRNA synthetase family. Glutamate--tRNA ligase type 1 subfamily. As to quaternary structure, monomer.

The protein localises to the cytoplasm. It catalyses the reaction tRNA(Glu) + L-glutamate + ATP = L-glutamyl-tRNA(Glu) + AMP + diphosphate. Functionally, catalyzes the attachment of glutamate to tRNA(Glu) in a two-step reaction: glutamate is first activated by ATP to form Glu-AMP and then transferred to the acceptor end of tRNA(Glu). This Streptococcus pneumoniae (strain Hungary19A-6) protein is Glutamate--tRNA ligase.